Reading from the N-terminus, the 231-residue chain is Putative cobalt transport protein CbiM 1 (231 aa).

Helical transmembrane passes span 8–28, 41–61, 74–94, 97–117, 138–158, and 175–195; these read LPLQWCLFWFAVSAPFIAYGI, TLPLLAVCGAFIFVLSSLKMP, GLGAIMFGPFITSVLSIIVLV, ALFLAHGGLTTLGANVFSMGI, IVNVFLASALADIFTYVITSI, and FITFAGIFAVTQVPLAIIEGI.

This sequence belongs to the CbiM family. As to quaternary structure, forms an energy-coupling factor (ECF) transporter complex composed of an ATP-binding protein (A component, CbiO), a transmembrane protein (T component, CbiQ) and 2 possible substrate-capture proteins (S components, CbiM and CbiN) of unknown stoichimetry.

Its subcellular location is the cell membrane. It functions in the pathway cofactor biosynthesis; adenosylcobalamin biosynthesis. Functionally, part of the energy-coupling factor (ECF) transporter complex CbiMNOQ involved in cobalt import. This is Putative cobalt transport protein CbiM 1 from Methanosphaerula palustris (strain ATCC BAA-1556 / DSM 19958 / E1-9c).